Here is a 582-residue protein sequence, read N- to C-terminus: Threonine--tRNA ligase (582 aa).

Residues 185–478 (DHRKLGKELE…LTEQYGGAFP (294 aa)) form a catalytic region. Zn(2+)-binding residues include cysteine 278, histidine 329, and histidine 455.

This sequence belongs to the class-II aminoacyl-tRNA synthetase family. In terms of assembly, homodimer. It depends on Zn(2+) as a cofactor.

It localises to the cytoplasm. It carries out the reaction tRNA(Thr) + L-threonine + ATP = L-threonyl-tRNA(Thr) + AMP + diphosphate + H(+). Its function is as follows. Catalyzes the attachment of threonine to tRNA(Thr) in a two-step reaction: L-threonine is first activated by ATP to form Thr-AMP and then transferred to the acceptor end of tRNA(Thr). Also edits incorrectly charged L-seryl-tRNA(Thr). This Dehalococcoides mccartyi (strain ATCC BAA-2266 / KCTC 15142 / 195) (Dehalococcoides ethenogenes (strain 195)) protein is Threonine--tRNA ligase.